The sequence spans 189 residues: Protein OPG107 (189 aa).

Topologically, residues 1 to 28 are intravirion; it reads MDKTTLSVNACNLEYVREKAIVGVQAAK. Residues 29–49 traverse the membrane as a helical; Signal-anchor for type III membrane protein segment; the sequence is TSTLIFFVIILAISALLLWFQ. At 50–189 the chain is on the virion surface side; sequence TSDNPVFNEL…HWCSDFSNME (140 aa).

It belongs to the orthopoxvirus OPG107 family. Part of a stable entry-fusion complex (EFC) which is at least composed of proteins OPG143, OPG147, OPG155, OPG86, OPG94, OPG107, OPG104, and OPG099. Formation of the viral membrane is necessary for the assembly of the complex. Post-translationally, contains two intramolecular disulfide bonds. They are created by the viral disulfide bond formation pathway, a poxvirus-specific pathway that operates on the cytoplasmic side of the MV membranes.

Its subcellular location is the virion membrane. It localises to the host endoplasmic reticulum membrane. Envelope protein part of the entry-fusion complex responsible for the virus membrane fusion with host cell membrane during virus entry. Also plays a role in cell-cell fusion (syncytium formation). This Bos taurus (Bovine) protein is Protein OPG107 (OPG107).